The sequence spans 118 residues: HTH-type transcriptional regulator SarT (118 aa).

Residues 55–78 (MRDIISYIGIDQSRIVKSVKELSK) constitute a DNA-binding region (H-T-H motif).

It belongs to the SarA family.

The protein localises to the cytoplasm. Transcriptional regulator acting as an intermediary between major regulators SarA and agr and virulence genes. Represses alpha-hemolysin (hla) gene expression. The protein is HTH-type transcriptional regulator SarT (sarT) of Staphylococcus aureus (strain Mu50 / ATCC 700699).